The following is a 355-amino-acid chain: Molybdenum import ATP-binding protein ModC (355 aa).

In terms of domain architecture, ABC transporter spans 1–233 (MTLIVEAKQR…PSAAADRKEA (233 aa)). ATP is bound at residue 31-38 (GRSGSGKT). The Mop domain maps to 291-355 (GLSALNILEG…AIIKTVALEG (65 aa)).

This sequence belongs to the ABC transporter superfamily. Molybdate importer (TC 3.A.1.8) family. The complex is composed of two ATP-binding proteins (ModC), two transmembrane proteins (ModB) and a solute-binding protein (ModA).

The protein localises to the cell inner membrane. The catalysed reaction is molybdate(out) + ATP + H2O = molybdate(in) + ADP + phosphate + H(+). In terms of biological role, part of the ABC transporter complex ModABC involved in molybdenum import. Responsible for energy coupling to the transport system. The protein is Molybdenum import ATP-binding protein ModC of Rhizobium etli (strain ATCC 51251 / DSM 11541 / JCM 21823 / NBRC 15573 / CFN 42).